Here is a 469-residue protein sequence, read N- to C-terminus: 3-isopropylmalate dehydratase large subunit (469 aa).

Residues cysteine 347, cysteine 410, and cysteine 413 each coordinate [4Fe-4S] cluster.

It belongs to the aconitase/IPM isomerase family. LeuC type 1 subfamily. Heterodimer of LeuC and LeuD. [4Fe-4S] cluster serves as cofactor.

The catalysed reaction is (2R,3S)-3-isopropylmalate = (2S)-2-isopropylmalate. The protein operates within amino-acid biosynthesis; L-leucine biosynthesis; L-leucine from 3-methyl-2-oxobutanoate: step 2/4. Functionally, catalyzes the isomerization between 2-isopropylmalate and 3-isopropylmalate, via the formation of 2-isopropylmaleate. The sequence is that of 3-isopropylmalate dehydratase large subunit from Ralstonia nicotianae (strain ATCC BAA-1114 / GMI1000) (Ralstonia solanacearum).